The sequence spans 116 residues: Large ribosomal subunit protein bL17 (116 aa).

It belongs to the bacterial ribosomal protein bL17 family. In terms of assembly, part of the 50S ribosomal subunit. Contacts protein L32.

The protein is Large ribosomal subunit protein bL17 of Aliarcobacter butzleri (strain RM4018) (Arcobacter butzleri).